The following is a 397-amino-acid chain: GDNF family receptor alpha-3 (397 aa).

Residues 1-28 (MGLSWSPRPPLLMILLLVLSLWLPLGAG) form the signal peptide. A disulfide bridge connects residues cysteine 48 and cysteine 54. N-linked (GlcNAc...) asparagine glycans are attached at residues asparagine 92 and asparagine 145. 10 disulfides stabilise this stretch: cysteine 159/cysteine 215, cysteine 166/cysteine 172, cysteine 183/cysteine 193, cysteine 188/cysteine 236, cysteine 217/cysteine 224, cysteine 245/cysteine 313, cysteine 252/cysteine 258, cysteine 269/cysteine 285, cysteine 278/cysteine 337, and cysteine 315/cysteine 325. Asparagine 306 carries an N-linked (GlcNAc...) asparagine glycan. A lipid anchor (GPI-anchor amidated asparagine) is attached at asparagine 371. A propeptide spans 372–397 (PALRLQPRLPILSFSILPLILLQTLW) (removed in mature form).

It belongs to the GDNFR family. As to quaternary structure, interacts with ARTN ligand and RET: forms a 2:2:2 ternary complex composed of ARTN ligand, GFRA3 and RET receptor. Interacts with SORL1.

It is found in the cell membrane. Receptor for artemin (ARTN), a growth factor that supports the survival of sensory and sympathetic peripheral neurons. ARTN-binding leads to autophosphorylation and activation of the RET receptor. The sequence is that of GDNF family receptor alpha-3 (Gfra3) from Mus musculus (Mouse).